A 524-amino-acid chain; its full sequence is Na(+)/H(+) antiporter NhaG (524 aa).

11 helical membrane-spanning segments follow: residues L6 to I26, P33 to F53, F59 to L79, V98 to W118, A126 to F146, L169 to I189, G193 to L213, F242 to I262, F283 to I303, W312 to I332, and D374 to I394.

The protein belongs to the monovalent cation:proton antiporter 1 (CPA1) transporter (TC 2.A.36) family.

It is found in the cell membrane. In terms of biological role, na(+)/H(+) antiporter that extrudes sodium in exchange for external protons. Can also transport lithium. The chain is Na(+)/H(+) antiporter NhaG (nhaG) from Bacillus atrophaeus.